Here is a 359-residue protein sequence, read N- to C-terminus: UDP-2-acetamido-2-deoxy-3-oxo-D-glucuronate aminotransferase (359 aa).

3 residues coordinate UDP-2-acetamido-2-deoxy-alpha-D-ribo-hex-3-uluronate: Gly29, Tyr31, and Ser184. Lys185 bears the N6-(pyridoxal phosphate)lysine mark. UDP-2-acetamido-2-deoxy-alpha-D-ribo-hex-3-uluronate is bound by residues Arg229, His308, and Tyr309.

The protein belongs to the DegT/DnrJ/EryC1 family. Homodimer. The cofactor is pyridoxal 5'-phosphate.

It carries out the reaction UDP-2-acetamido-2-deoxy-alpha-D-ribo-hex-3-uluronate + L-glutamate = UDP-2-acetamido-3-amino-2,3-dideoxy-alpha-D-glucuronate + 2-oxoglutarate. The protein operates within bacterial outer membrane biogenesis; LPS O-antigen biosynthesis. Plays a role in the biosynthesis of B-band O antigen for serotype O5. Catalyzes the amination of UDP-2-acetamido-2-deoxy-3-oxo-D-glucuronic acid (UDP-3-oxo-D-GlcNAcA) to UDP-2-acetamido-3-amino-2,3-dideoxy-D-glucuronic acid (UDP-GlcNAc3NA), using L-glutamate as the preferred amine donor. The protein is UDP-2-acetamido-2-deoxy-3-oxo-D-glucuronate aminotransferase of Pseudomonas aeruginosa (strain ATCC 15692 / DSM 22644 / CIP 104116 / JCM 14847 / LMG 12228 / 1C / PRS 101 / PAO1).